Here is a 218-residue protein sequence, read N- to C-terminus: MNDDSETPGAEAWMALPLFNRKASPDHEQNVLTWFECWRPPEDDVSDFKSLEDYEDSPTHSIGSSGLHSGSLDSDYHYYTASDLVFSDDGGVGRNADLLSEISDDHIPQLSFSTPSTCPFPGCKSTALFTTGRDFRRHYRQHFKRFFCRYEECSQSTNDPGDAGKKGFATRKDRARHEAKHNPAIRCQWRDNNGDQCTRTFSRMDNMRDHFRRIHGKE.

The interval 154–181 (SQSTNDPGDAGKKGFATRKDRARHEAKH) is disordered. Residues 162 to 176 (DAGKKGFATRKDRAR) show a composition bias toward basic and acidic residues. A C2H2-type zinc finger spans residues 185–215 (IRCQWRDNNGDQCTRTFSRMDNMRDHFRRIH).

The protein localises to the nucleus. Its function is as follows. Transcriptional activator of part of the trichothecene biosynthesis cluster that mediates the production of the antimicrobial trichothecene harzianum A (HA) that plays a role in Botrytis cinerea antagonistic activity and plant defense priming. Regulates expression of both trichothecene and mevalonate pathway genes. This is Trichothecene biosynthesis transcription regulator TRI6 from Trichoderma arundinaceum.